The primary structure comprises 287 residues: Protein PXR1 (287 aa).

The region spanning 25–72 is the G-patch domain; it reads TSRFGHLQLEKFGWKPGMGLGMSPTSSHKTHIKVSIKDDNLGLGAKIK. A compositionally biased stretch (basic and acidic residues) spans 143–155; sequence LKSYSNDKKRSRD. Positions 143–254 are disordered; sequence LKSYSNDKKR…TTASNIPSTV (112 aa). The segment covering 163-190 has biased composition (basic residues); sequence SKNKSKKQKKDKKDKKDKKDKKDKKDKK. Residues 191-200 are compositionally biased toward basic and acidic residues; sequence DKKDKTEKKE. The segment covering 201 to 220 has biased composition (basic residues); it reads KKEKKEKKEKKEKKDKKDKK. Residues 221–230 show a composition bias toward basic and acidic residues; it reads DKKDKIDKKD. The span at 239–251 shows a compositional bias: polar residues; sequence NNIEVSTTASNIP.

The protein belongs to the PINX1 family.

It localises to the nucleus. Its subcellular location is the nucleolus. Functionally, involved in rRNA-processing at A0, A1 and A2 sites and negatively regulates telomerase. The polypeptide is Protein PXR1 (PXR1) (Vanderwaltozyma polyspora (strain ATCC 22028 / DSM 70294 / BCRC 21397 / CBS 2163 / NBRC 10782 / NRRL Y-8283 / UCD 57-17) (Kluyveromyces polysporus)).